The primary structure comprises 493 residues: Vacuolar-processing enzyme (493 aa).

A signal peptide spans M1 to G34. The propeptide occupies K35–D53. Residue H176 is part of the active site. C218 serves as the catalytic Nucleophile. A disulfide bridge links C251 with C265. N318 is a glycosylation site (N-linked (GlcNAc...) asparagine). 2 disulfides stabilise this stretch: C429/C459 and C441/C476.

It belongs to the peptidase C13 family.

In terms of biological role, asparagine-specific endopeptidase involved in the processing of vacuolar seed protein precursors into the mature forms. In Phaseolus vulgaris (Kidney bean), this protein is Vacuolar-processing enzyme.